A 123-amino-acid chain; its full sequence is Immunoglobulin heavy variable 4-34 (123 aa).

The first 26 residues, 1 to 26 (MDLLHKNMKHLWFFLLLVAAPRWVLS), serve as a signal peptide directing secretion. A v region region spans residues 26–123 (SQVQLQQWGA…ADTAVYYCAR (98 aa)). A framework-1 region spans residues 27–51 (QVQLQQWGAGLLKPSETLSLTCAVY). Residues 27–123 (QVQLQQWGAG…ADTAVYYCAR (97 aa)) enclose the Ig-like domain. A disulfide bridge links C48 with C121. The interval 52–59 (GGSFSGYY) is complementarity-determining-1. Residues 60 to 76 (WSWIRQPPGKGLEWIGE) form a framework-2 region. The interval 77 to 83 (INHSGST) is complementarity-determining-2. A glycan (N-linked (GlcNAc...) asparagine) is linked at N78. The tract at residues 84-121 (NYNPSLKSRVTISVDTSKNQFSLKLSSVTAADTAVYYC) is framework-3. The segment at 122–123 (AR) is complementarity-determining-3.

In terms of assembly, immunoglobulins are composed of two identical heavy chains and two identical light chains; disulfide-linked.

The protein resides in the secreted. It localises to the cell membrane. In terms of biological role, v region of the variable domain of immunoglobulin heavy chains that participates in the antigen recognition. Immunoglobulins, also known as antibodies, are membrane-bound or secreted glycoproteins produced by B lymphocytes. In the recognition phase of humoral immunity, the membrane-bound immunoglobulins serve as receptors which, upon binding of a specific antigen, trigger the clonal expansion and differentiation of B lymphocytes into immunoglobulins-secreting plasma cells. Secreted immunoglobulins mediate the effector phase of humoral immunity, which results in the elimination of bound antigens. The antigen binding site is formed by the variable domain of one heavy chain, together with that of its associated light chain. Thus, each immunoglobulin has two antigen binding sites with remarkable affinity for a particular antigen. The variable domains are assembled by a process called V-(D)-J rearrangement and can then be subjected to somatic hypermutations which, after exposure to antigen and selection, allow affinity maturation for a particular antigen. In Homo sapiens (Human), this protein is Immunoglobulin heavy variable 4-34.